We begin with the raw amino-acid sequence, 172 residues long: Protein GrpE (172 aa).

This sequence belongs to the GrpE family. In terms of assembly, homodimer.

It is found in the cytoplasm. Participates actively in the response to hyperosmotic and heat shock by preventing the aggregation of stress-denatured proteins, in association with DnaK and GrpE. It is the nucleotide exchange factor for DnaK and may function as a thermosensor. Unfolded proteins bind initially to DnaJ; upon interaction with the DnaJ-bound protein, DnaK hydrolyzes its bound ATP, resulting in the formation of a stable complex. GrpE releases ADP from DnaK; ATP binding to DnaK triggers the release of the substrate protein, thus completing the reaction cycle. Several rounds of ATP-dependent interactions between DnaJ, DnaK and GrpE are required for fully efficient folding. This Thermotoga maritima (strain ATCC 43589 / DSM 3109 / JCM 10099 / NBRC 100826 / MSB8) protein is Protein GrpE.